Reading from the N-terminus, the 4042-residue chain is Polyketide synthase-nonribosomal peptide synthetase phmA (4042 aa).

In terms of domain architecture, Ketosynthase family 3 (KS3) spans 10-411; the sequence is NEPIAIVGSA…GANAHAILEA (402 aa). The tract at residues 519–837 is acyl transferase; the sequence is VFTGQGAQWA…TGLLSRDRDD (319 aa). The interval 909 to 1042 is N-terminal hotdog fold; that stretch reads HELLGTKCPD…GRISALFGPP (134 aa). The interval 909-1208 is dehydratase (DH) domain; that stretch reads HELLGTKCPD…LHTKPLGHAT (300 aa). A PKS/mFAS DH domain is found at 909–1210; that stretch reads HELLGTKCPD…TKPLGHATPE (302 aa). The active-site Proton acceptor; for dehydratase activity is histidine 941. The interval 1057–1210 is C-terminal hotdog fold; sequence MIDVDPEQFY…TKPLGHATPE (154 aa). The Proton donor; for dehydratase activity role is filled by aspartate 1117. Positions 1349–1572 are methyltransferase (MT) domain; sequence DDMLNDFYVK…VDEHVEFIRN (224 aa). Positions 2073 to 2246 are ketoreductase (KR)domain; that stretch reads TYWLVGLTGG…AGSVINIGAI (174 aa). The region spanning 2351-2433 is the Carrier 1 domain; that stretch reads ATTADEVNEA…ELVSAAQEQL (83 aa). The residue at position 2393 (serine 2393) is an O-(pantetheine 4'-phosphoryl)serine. 2 disordered regions span residues 2460–2504 and 2535–2554; these read KTET…SKDA and ATRSKTSSSSSSFTSDPEND. The span at 2479–2490 shows a compositional bias: acidic residues; sequence EVDEEEQEEDEA. Over residues 2495-2504 the composition is skewed to polar residues; the sequence is NFFSSASKDA. Residues 2536-2549 show a composition bias toward low complexity; sequence TRSKTSSSSSSFTS. A condensation region spans residues 2584-3019; sequence RVSPMSFGQA…LGRPPLYDPQ (436 aa). Residues 3047-3443 are adenylation; sequence EMASRFGSQI…TADGLVLEGR (397 aa). The Carrier 2 domain maps to 3562 to 3642; the sequence is KENKSPESEL…AMLNLISPAS (81 aa). Position 3602 is an O-(pantetheine 4'-phosphoryl)serine (serine 3602). The reductase-like stretch occupies residues 3703-3924; the sequence is ITGASGFLGK…DFVSVESVAH (222 aa).

Belongs to the NRP synthetase family.

It participates in mycotoxin biosynthesis. Hybrid PKS-NRPS synthetase; part of the gene cluster that mediates the biosynthesis of the mycotoxins phomacins, leucine-derived cytochalasans with potent actin polymerization-inhibitory activities and monocot-specific antigerminative activities. The first step in the pathway is catalyzed by the hybrid PKS-NRPS phmA, assisted by the enoyl reductase phmE, that are responsible for fusion of the leucine precursor and the polyketide backbone to produce a 2-pyrrolidone intermediate. The polyketide synthase module (PKS) of phmA is responsible for the synthesis of the polyketide backbone and the downstream nonribosomal peptide synthetase (NRPS) amidates the carboxyl end of the polyketide with the leucine precursor. Because phmA lacks a designated enoylreductase (ER) domain, the required activity is provided the enoyl reductase phmE. Reduction by the hydrolyase phmG, followed by dehydration and intra-molecular Diels-Alder cyclization by the Diels-Alderase phmD then yield the required isoindolone-fused macrocycle. A number of oxidative steps catalyzed by the tailoring cytochrome P450 monooxygenase phmB, the FAD-linked oxidoreductase phmC and the short-chain dehydrogenase/reductase phmF, are further required to afford the final products, phomacin D and phomacin E. The protein is Polyketide synthase-nonribosomal peptide synthetase phmA of Phaeosphaeria nodorum (strain SN15 / ATCC MYA-4574 / FGSC 10173) (Glume blotch fungus).